The chain runs to 208 residues: Riboflavin synthase (208 aa).

2 Lumazine-binding repeats span residues 1–97 (MFTG…MGGH) and 98–195 (FVQG…EKLV). 2,4-dihydroxypteridine contacts are provided by residues 4–6 (GLV), 48–50 (CLT), 62–67 (GIAPES), 101–103 (GHV), K137, 146–148 (SLT), and 160–165 (MMISYT).

In terms of assembly, homotrimer.

The catalysed reaction is 2 6,7-dimethyl-8-(1-D-ribityl)lumazine + H(+) = 5-amino-6-(D-ribitylamino)uracil + riboflavin. It participates in cofactor biosynthesis; riboflavin biosynthesis; riboflavin from 2-hydroxy-3-oxobutyl phosphate and 5-amino-6-(D-ribitylamino)uracil: step 2/2. Functionally, catalyzes the dismutation of two molecules of 6,7-dimethyl-8-ribityllumazine, resulting in the formation of riboflavin and 5-amino-6-(D-ribitylamino)uracil. This chain is Riboflavin synthase (rib5), found in Schizosaccharomyces pombe (strain 972 / ATCC 24843) (Fission yeast).